The primary structure comprises 349 residues: Hydroxymethylglutaryl-CoA synthase (349 aa).

(3S)-3-hydroxy-3-methylglutaryl-CoA contacts are provided by Asp-29 and Ala-30. The active-site Proton donor/acceptor is Glu-81. (3S)-3-hydroxy-3-methylglutaryl-CoA is bound by residues Cys-113 and Thr-154. Cys-113 serves as the catalytic Acyl-thioester intermediate. Residue Arg-202 participates in CoA binding. Positions 204 and 237 each coordinate (3S)-3-hydroxy-3-methylglutaryl-CoA. The active-site Proton donor/acceptor is His-237. Lys-242 provides a ligand contact to CoA. (3S)-3-hydroxy-3-methylglutaryl-CoA is bound by residues Lys-246, Asn-269, and Ser-299.

The protein belongs to the thiolase-like superfamily. Archaeal HMG-CoA synthase family. Interacts with acetoacetyl-CoA thiolase that catalyzes the precedent step in the pathway and with a DUF35 protein. The acetoacetyl-CoA thiolase/HMG-CoA synthase complex channels the intermediate via a fused CoA-binding site, which allows for efficient coupling of the endergonic thiolase reaction with the exergonic HMGCS reaction.

The enzyme catalyses acetoacetyl-CoA + acetyl-CoA + H2O = (3S)-3-hydroxy-3-methylglutaryl-CoA + CoA + H(+). The protein operates within metabolic intermediate biosynthesis; (R)-mevalonate biosynthesis; (R)-mevalonate from acetyl-CoA: step 2/3. Catalyzes the condensation of acetyl-CoA with acetoacetyl-CoA to form 3-hydroxy-3-methylglutaryl-CoA (HMG-CoA). Functions in the mevalonate (MVA) pathway leading to isopentenyl diphosphate (IPP), a key precursor for the biosynthesis of isoprenoid compounds that are building blocks of archaeal membrane lipids. This is Hydroxymethylglutaryl-CoA synthase from Methanosarcina acetivorans (strain ATCC 35395 / DSM 2834 / JCM 12185 / C2A).